We begin with the raw amino-acid sequence, 581 residues long: Pectinesterase 3 (581 aa).

The N-terminal stretch at 1–55 is a signal peptide; that stretch reads MDTIKSFKGYGKVNELEQQAYEKKTRKRLIIIAVSSIVLIAVIIAAVAGVVIHNR. 5 N-linked (GlcNAc...) asparagine glycosylation sites follow: Asn-101, Asn-156, Asn-200, Asn-217, and Asn-268. Positions 348 and 378 each coordinate substrate. The active-site Proton donor is Asp-401. The cysteines at positions 415 and 435 are disulfide-linked. The active-site Nucleophile is Asp-422. N-linked (GlcNAc...) asparagine glycosylation is present at Asn-477. Residues Arg-486 and Trp-488 each contribute to the substrate site.

This sequence in the N-terminal section; belongs to the PMEI family. In the C-terminal section; belongs to the pectinesterase family.

It localises to the secreted. The protein resides in the cell wall. It carries out the reaction [(1-&gt;4)-alpha-D-galacturonosyl methyl ester](n) + n H2O = [(1-&gt;4)-alpha-D-galacturonosyl](n) + n methanol + n H(+). It functions in the pathway glycan metabolism; pectin degradation; 2-dehydro-3-deoxy-D-gluconate from pectin: step 1/5. Functionally, may have roles in the deposition of pectin in developing tissues and in the wall loosening and cell separation that occurs in cell expansion, fruit ripening and abscission. The protein is Pectinesterase 3 (MPE3) of Phaseolus vulgaris (Kidney bean).